The primary structure comprises 428 residues: UPF0053 inner membrane protein YfjD (428 aa).

Residues M1–H3 lie on the Cytoplasmic side of the membrane. The CNNM transmembrane domain maps to E2–M192. The helical transmembrane segment at I4–S24 threads the bilayer. Over G25–S64 the chain is Periplasmic. Residues L65–G85 form a helical membrane-spanning segment. The Cytoplasmic portion of the chain corresponds to M86 to D91. The chain crosses the membrane as a helical span at residues A92–L112. Over P113–S129 the chain is Periplasmic. A helical membrane pass occupies residues F130–T150. At R151–E428 the chain is on the cytoplasmic side. CBS domains are found at residues M208 to E270 and M272 to S332.

The protein belongs to the UPF0053 family.

The protein localises to the cell inner membrane. The protein is UPF0053 inner membrane protein YfjD (yfjD) of Escherichia coli (strain K12).